Reading from the N-terminus, the 151-residue chain is D-aminoacyl-tRNA deacylase (151 aa).

A Gly-cisPro motif, important for rejection of L-amino acids motif is present at residues 137–138; the sequence is GP.

It belongs to the DTD family. Homodimer.

It localises to the cytoplasm. The catalysed reaction is glycyl-tRNA(Ala) + H2O = tRNA(Ala) + glycine + H(+). It catalyses the reaction a D-aminoacyl-tRNA + H2O = a tRNA + a D-alpha-amino acid + H(+). Functionally, an aminoacyl-tRNA editing enzyme that deacylates mischarged D-aminoacyl-tRNAs. Also deacylates mischarged glycyl-tRNA(Ala), protecting cells against glycine mischarging by AlaRS. Acts via tRNA-based rather than protein-based catalysis; rejects L-amino acids rather than detecting D-amino acids in the active site. By recycling D-aminoacyl-tRNA to D-amino acids and free tRNA molecules, this enzyme counteracts the toxicity associated with the formation of D-aminoacyl-tRNA entities in vivo and helps enforce protein L-homochirality. The polypeptide is D-aminoacyl-tRNA deacylase (Protochlamydia amoebophila (strain UWE25)).